A 717-amino-acid polypeptide reads, in one-letter code: MELLKKYPKFFQWLFLLIVFFSLCFAIEVPETYNFIRGQAEFIKDPNQSTYTLFGAEVRYYAFDVFWRLPPLLGWLPIWINDSLFFLMNEWMPMEFWNEDIQEFRTQPLLLQITRNLTSFMTFLIELIREILLGGVETIVSFSSWDWIDANPWAELPGLPWTIVTAGAVILGYKLSGKGLALFAGLVMIYISVFGQWKPSMQTLSFILVAAPLSFLFGLTFGVMAFKSKRVEKFLYPILLVMQTMPQYAVLVPAIVLFGIGDHAAVIITMVVAVPPMILLTLLGLRGIPSEVIEAGRMSGCNNWQLMTKVLIPTARRDILIGVNQVIMVCFSMAVISAFIGAKGLGFNLLLALNQLNIGLALEAGLCISLIAILLDKMSLAWANKQIDYFGNLTYFQRNKNILFFAAAVILGIIFSYLGSFYFKDGSNYLFEVPHNKGISTADFWNKGVDWIWDTFFHTLKIFNTWLIVDVLQPMRALYLRMPAVATLVLVIGAGYIIGGIRSALVVGGLTLFIALSPWWDRALVTLYMATFGVFISTIIGFTVGIISFQNKHTANFMLGVCDIFQTFPSFVYLIPVMMLFGVTDTSVLIAVIVYATIPATRYTIEGLRSVPEALHDAATMSGVNKVQRLLKIEFPLAFPHMMLGLNQTIVFALFMVIIGAFIGTEDLGQYILKALSDKKGAGIGLTLGLCVAFIGLIFDHLIRTWVGKRKKHLGIG.

Transmembrane regions (helical) follow at residues 10 to 30 (FFQWLFLLIVFFSLCFAIEVP), 69 to 89 (LPPLLGWLPIWINDSLFFLMN), 120 to 140 (FMTFLIELIREILLGGVETIV), 153 to 173 (WAELPGLPWTIVTAGAVILGY), 175 to 195 (LSGKGLALFAGLVMIYISVFG), 206 to 226 (FILVAAPLSFLFGLTFGVMAF), 238 to 258 (ILLVMQTMPQYAVLVPAIVLF), 265 to 285 (AVIITMVVAVPPMILLTLLGL), 319 to 339 (ILIGVNQVIMVCFSMAVISAF), 355 to 375 (QLNIGLALEAGLCISLIAILL), 402 to 422 (ILFFAAAVILGIIFSYLGSFY), 452 to 472 (IWDTFFHTLKIFNTWLIVDVL), 488 to 508 (LVLVIGAGYIIGGIRSALVVG), 527 to 547 (LYMATFGVFISTIIGFTVGII), 574 to 594 (LIPVMMLFGVTDTSVLIAVIV), 643 to 663 (MLGLNQTIVFALFMVIIGAFI), and 683 to 703 (GIGLTLGLCVAFIGLIFDHLI). Residues 200–379 (SMQTLSFILV…LIAILLDKMS (180 aa)) form the ABC transmembrane type-1 1 domain. The ABC transmembrane type-1 2 domain occupies 523–703 (ALVTLYMATF…FIGLIFDHLI (181 aa)).

This sequence belongs to the binding-protein-dependent transport system permease family. The complex is probably composed of two ATP-binding proteins (TmoW), two transmembrane proteins (TmoV) and a solute-binding protein (TmoX).

The protein localises to the cell inner membrane. Functionally, part of the ABC transporter complex TmoXWV involved in trimethylamine N-oxide (TMAO) import. Responsible for the translocation of the substrate across the membrane. In Pelagibacter ubique (strain HTCC1062), this protein is Trimethylamine N-oxide transport system permease protein TmoV.